We begin with the raw amino-acid sequence, 121 residues long: Large ribosomal subunit protein eL18 (121 aa).

Belongs to the eukaryotic ribosomal protein eL18 family.

The sequence is that of Large ribosomal subunit protein eL18 from Methanoregula boonei (strain DSM 21154 / JCM 14090 / 6A8).